Here is a 194-residue protein sequence, read N- to C-terminus: Imidazoleglycerol-phosphate dehydratase (194 aa).

Belongs to the imidazoleglycerol-phosphate dehydratase family.

The protein localises to the cytoplasm. The enzyme catalyses D-erythro-1-(imidazol-4-yl)glycerol 3-phosphate = 3-(imidazol-4-yl)-2-oxopropyl phosphate + H2O. The protein operates within amino-acid biosynthesis; L-histidine biosynthesis; L-histidine from 5-phospho-alpha-D-ribose 1-diphosphate: step 6/9. The polypeptide is Imidazoleglycerol-phosphate dehydratase (Clostridium kluyveri (strain NBRC 12016)).